The primary structure comprises 309 residues: Isethionate sulfite-lyase activating enzyme (309 aa).

The Radical SAM core domain maps to 22-309 (HDGPGIRTVV…VVAAEHATDG (288 aa)). The [4Fe-4S] cluster site is built by Cys-36, Cys-40, Cys-43, Cys-62, Cys-68, Cys-71, Cys-75, Cys-95, Cys-98, Cys-102, and Cys-106. Residue 42–44 (WCS) participates in S-adenosyl-L-methionine binding. 2 4Fe-4S ferredoxin-type domains span residues 53 to 85 (IELA…RADD) and 86 to 117 (DTIS…YGTT). Residues Gly-146, 195–197 (DIK), and His-268 contribute to the S-adenosyl-L-methionine site.

Belongs to the organic radical-activating enzymes family. Monomer. It depends on [4Fe-4S] cluster as a cofactor.

It carries out the reaction glycyl-[protein] + reduced [flavodoxin] + S-adenosyl-L-methionine = glycin-2-yl radical-[protein] + semiquinone [flavodoxin] + 5'-deoxyadenosine + L-methionine + H(+). Its pathway is organosulfur degradation; alkanesulfonate degradation. Its function is as follows. Involved in an anaerobic respiration pathway that converts the sulfonate isethionate (2-hydroxyethanesulfonate) to ammonia, acetate and sulfide. Catalyzes activation of the isethionate sulfite-lyase IslA under anaerobic conditions by generation of an organic free radical on a glycine residue, via a homolytic cleavage of S-adenosyl-L-methionine (SAM). This Oleidesulfovibrio alaskensis (strain ATCC BAA-1058 / DSM 17464 / G20) (Desulfovibrio alaskensis) protein is Isethionate sulfite-lyase activating enzyme.